A 313-amino-acid chain; its full sequence is Pantothenate synthetase (313 aa).

43–50 (MGALHEGH) is an ATP binding site. Residue H50 is the Proton donor of the active site. (R)-pantoate is bound at residue Q75. Q75 is a beta-alanine binding site. ATP is bound at residue 161–164 (GEKD). Q167 is a binding site for (R)-pantoate. Residues V190 and 198-201 (LSSR) each bind ATP.

The protein belongs to the pantothenate synthetase family. In terms of assembly, homodimer.

The protein localises to the cytoplasm. It carries out the reaction (R)-pantoate + beta-alanine + ATP = (R)-pantothenate + AMP + diphosphate + H(+). It participates in cofactor biosynthesis; (R)-pantothenate biosynthesis; (R)-pantothenate from (R)-pantoate and beta-alanine: step 1/1. Catalyzes the condensation of pantoate with beta-alanine in an ATP-dependent reaction via a pantoyl-adenylate intermediate. The sequence is that of Pantothenate synthetase from Mycobacterium sp. (strain KMS).